A 396-amino-acid chain; its full sequence is Formate-dependent phosphoribosylglycinamide formyltransferase (396 aa).

N(1)-(5-phospho-beta-D-ribosyl)glycinamide is bound by residues 24–25 (EL) and Glu84. ATP contacts are provided by residues Arg116, Lys157, 162 to 167 (SSGKGQ), 197 to 200 (EGFV), and Glu205. Positions 121–310 (RLAAETLGIK…EFALHVRAIL (190 aa)) constitute an ATP-grasp domain. Glu269 and Glu281 together coordinate Mg(2+). N(1)-(5-phospho-beta-D-ribosyl)glycinamide is bound by residues Asp288, Lys359, and 366 to 367 (RR).

The protein belongs to the PurK/PurT family. In terms of assembly, homodimer.

The catalysed reaction is N(1)-(5-phospho-beta-D-ribosyl)glycinamide + formate + ATP = N(2)-formyl-N(1)-(5-phospho-beta-D-ribosyl)glycinamide + ADP + phosphate + H(+). Its pathway is purine metabolism; IMP biosynthesis via de novo pathway; N(2)-formyl-N(1)-(5-phospho-D-ribosyl)glycinamide from N(1)-(5-phospho-D-ribosyl)glycinamide (formate route): step 1/1. In terms of biological role, involved in the de novo purine biosynthesis. Catalyzes the transfer of formate to 5-phospho-ribosyl-glycinamide (GAR), producing 5-phospho-ribosyl-N-formylglycinamide (FGAR). Formate is provided by PurU via hydrolysis of 10-formyl-tetrahydrofolate. The sequence is that of Formate-dependent phosphoribosylglycinamide formyltransferase from Psychromonas ingrahamii (strain DSM 17664 / CCUG 51855 / 37).